Consider the following 102-residue polypeptide: Small ribosomal subunit protein uS10 (102 aa).

This sequence belongs to the universal ribosomal protein uS10 family. In terms of assembly, part of the 30S ribosomal subunit.

Involved in the binding of tRNA to the ribosomes. The sequence is that of Small ribosomal subunit protein uS10 from Paracoccus denitrificans (strain Pd 1222).